Here is a 312-residue protein sequence, read N- to C-terminus: Calcium-independent mitochondrial carrier protein SCaMC-3L (312 aa).

Solcar repeat units follow at residues 27–113, 121–206, and 217–304; these read GTLW…SRNF, PSFQ…LRCL, and PSGL…MKKT. The next 6 membrane-spanning stretches (helical) occupy residues 33-50, 88-107, 131-144, 182-200, 219-243, and 279-298; these read LLSG…TAPL, GNGI…FSVF, SLAV…INPM, YLPN…LAVY, GLVS…LTLV, and GMTP…YLVY.

The protein belongs to the mitochondrial carrier (TC 2.A.29) family. Mainly expressed in testis and at lesser levels in brain.

It is found in the mitochondrion inner membrane. The enzyme catalyses Mg(2+)(out) + phosphate(in) + ATP(out) = Mg(2+)(in) + phosphate(out) + ATP(in). It carries out the reaction ADP(out) + phosphate(in) + H(+)(out) = ADP(in) + phosphate(out) + H(+)(in). Its function is as follows. Calcium-independent ATP-Mg/Pi exchanger that catalyzes the electroneutral exchange of Mg-ATP or free ADP against an hydrogenphosphate and participates in the net transport of adenine nucleotides across the mitochondria inner membrane. The protein is Calcium-independent mitochondrial carrier protein SCaMC-3L of Rattus norvegicus (Rat).